Consider the following 213-residue polypeptide: Ribonuclease HII (213 aa).

Residues 1 to 213 (MKIIGIDEAG…SWKTAQKFIQ (213 aa)) form the RNase H type-2 domain. Residues aspartate 7, glutamate 8, and aspartate 105 each coordinate a divalent metal cation.

Belongs to the RNase HII family. Mn(2+) serves as cofactor. The cofactor is Mg(2+).

It is found in the cytoplasm. The enzyme catalyses Endonucleolytic cleavage to 5'-phosphomonoester.. Endonuclease that specifically degrades the RNA of RNA-DNA hybrids. This Methanococcoides burtonii (strain DSM 6242 / NBRC 107633 / OCM 468 / ACE-M) protein is Ribonuclease HII.